A 535-amino-acid chain; its full sequence is Putative transcription activator BRLF1 homolog (535 aa).

The segment at 384 to 426 (KTNFPLKRKRQSRNIDPNTPRRPRGRPKGSKTKKRPTCSPALF) is disordered. The span at 404–419 (RRPRGRPKGSKTKKRP) shows a compositional bias: basic residues.

This sequence belongs to the herpesviridae TAF50 family.

Its function is as follows. Transcription activation. Regulates the delayed-early 110 kDa promoter. This chain is Putative transcription activator BRLF1 homolog (50), found in Saimiriine herpesvirus 2 (strain 11) (SaHV-2).